The primary structure comprises 357 residues: 3-dehydroquinate synthase (357 aa).

Residues 69–74, 103–107, 127–128, K140, K149, and 167–170 contribute to the NAD(+) site; these read DGEQFK, GVVGD, TT, and CLQT. Zn(2+)-binding residues include E182, H245, and H262.

Belongs to the sugar phosphate cyclases superfamily. Dehydroquinate synthase family. Co(2+) serves as cofactor. Requires Zn(2+) as cofactor. NAD(+) is required as a cofactor.

It localises to the cytoplasm. The enzyme catalyses 7-phospho-2-dehydro-3-deoxy-D-arabino-heptonate = 3-dehydroquinate + phosphate. Its pathway is metabolic intermediate biosynthesis; chorismate biosynthesis; chorismate from D-erythrose 4-phosphate and phosphoenolpyruvate: step 2/7. In terms of biological role, catalyzes the conversion of 3-deoxy-D-arabino-heptulosonate 7-phosphate (DAHP) to dehydroquinate (DHQ). The protein is 3-dehydroquinate synthase of Idiomarina loihiensis (strain ATCC BAA-735 / DSM 15497 / L2-TR).